We begin with the raw amino-acid sequence, 300 residues long: Ferredoxin/F(420)H(2)-dependent CoB-CoM heterodisulfide reductase subunit B (300 aa).

The protein belongs to the HdrB family. The ferredoxin/F(420)H(2)-dependent CoB-CoM heterodisulfide reductase is composed of three subunits; HdrA2, HdrB2 and HdrC2. [4Fe-4S] cluster serves as cofactor.

Its subcellular location is the cytoplasm. The catalysed reaction is coenzyme B + coenzyme M + 2 oxidized [2Fe-2S]-[ferredoxin] = coenzyme M-coenzyme B heterodisulfide + 2 reduced [2Fe-2S]-[ferredoxin] + 2 H(+). The enzyme catalyses coenzyme B + 2 oxidized coenzyme F420-(gamma-L-Glu)(n) + coenzyme M + 2 reduced [2Fe-2S]-[ferredoxin] + 4 H(+) = coenzyme M-coenzyme B heterodisulfide + 2 reduced coenzyme F420-(gamma-L-Glu)(n) + 2 oxidized [2Fe-2S]-[ferredoxin]. The protein operates within cofactor metabolism; coenzyme M-coenzyme B heterodisulfide reduction; coenzyme B and coenzyme M from coenzyme M-coenzyme B heterodisulfide: step 1/1. In terms of biological role, part of a complex that catalyzes the reversible reduction of CoM-S-S-CoB to the thiol-coenzymes H-S-CoM (coenzyme M) and H-S-CoB (coenzyme B). Catalyzes the transfer of electrons from ferredoxin to CoM-S-S-CoB during methanogenesis from acetate. Electrons transfer from ferredoxin to CoM-S-S-CoB via HdrA2, HdrC2 and HdrB2. In addition, the complex can use electron bifurcation to direct electron pairs from reduced coenzyme F420 towards the reduction of both ferredoxin and CoB-CoM heterodisulfide. This activity may take place during Fe(III)-dependent anaerobic methane oxidation. The polypeptide is Ferredoxin/F(420)H(2)-dependent CoB-CoM heterodisulfide reductase subunit B (Methanosarcina acetivorans (strain ATCC 35395 / DSM 2834 / JCM 12185 / C2A)).